Reading from the N-terminus, the 308-residue chain is Ribosomal RNA small subunit methyltransferase H (308 aa).

Residues 38 to 40 (GGH), Asp-58, Phe-82, Asp-99, and Gln-106 each bind S-adenosyl-L-methionine.

The protein belongs to the methyltransferase superfamily. RsmH family.

The protein resides in the cytoplasm. The catalysed reaction is cytidine(1402) in 16S rRNA + S-adenosyl-L-methionine = N(4)-methylcytidine(1402) in 16S rRNA + S-adenosyl-L-homocysteine + H(+). Its function is as follows. Specifically methylates the N4 position of cytidine in position 1402 (C1402) of 16S rRNA. The protein is Ribosomal RNA small subunit methyltransferase H of Acidovorax sp. (strain JS42).